Reading from the N-terminus, the 244-residue chain is 14-3-3 protein beta/alpha-B (244 aa).

Met-1 is modified (N-acetylmethionine).

This sequence belongs to the 14-3-3 family. Homodimer, and heterodimer with other family members.

The protein resides in the cytoplasm. In terms of biological role, adapter protein implicated in the regulation of a large spectrum of both general and specialized signaling pathways. Binds to a large number of partners, usually by recognition of a phosphoserine or phosphothreonine motif. Binding generally results in the modulation of the activity of the binding partner. The chain is 14-3-3 protein beta/alpha-B (ywhab-b) from Xenopus laevis (African clawed frog).